Consider the following 70-residue polypeptide: Consomatin Mrc3 (70 aa).

The signal sequence occupies residues 1–22 (MQTAYWVMVMMMVWITAPLSEG). Positions 23 to 55 (GKLNDVIRGLVPDDVTPKRILQSLISRRRFDGR) are excised as a propeptide. A disulfide bond links Cys62 and Cys67. Trp64 bears the D-tryptophan mark. A 4-hydroxyproline modification is found at Pro68. Tyr69 carries the tyrosine amide modification.

The protein belongs to the conotoxin C superfamily. Consomatin family. In terms of tissue distribution, expressed by the venom duct.

The protein resides in the secreted. Moderately activates human somatostatin receptors (SSTR) with a preferential activation of SSTR1 and SSTR4. In vivo, does not cause behavioral changes in mice within a few minutes of intracranial injection, but causes a progressive loss of movement thereafter. Four to five hours after injection, mice recover, even with the highest dose tested. Shows antinociception and antihyperalgesia activities in two mouse models of acute pain, most probably by acting outside the central nervous system. In Conus mercator (Trader cone), this protein is Consomatin Mrc3.